An 86-amino-acid chain; its full sequence is Large ribosomal subunit protein bL31 (86 aa).

Positions Y65–K86 are disordered. The segment covering K76–K86 has biased composition (basic and acidic residues).

It belongs to the bacterial ribosomal protein bL31 family. Type A subfamily. In terms of assembly, part of the 50S ribosomal subunit.

Binds the 23S rRNA. This chain is Large ribosomal subunit protein bL31, found in Prochlorococcus marinus (strain MIT 9312).